Here is a 1056-residue protein sequence, read N- to C-terminus: PAX-interacting protein 1 (1056 aa).

2 BRCT domains span residues 8–93 (VPEE…GFSP) and 94–183 (ESCQ…FYHP). The tract at residues 94-183 (ESCQIFFGLT…RRKDEAFYHP (90 aa)) is interaction with PAGR1. The span at 188–205 (YEEEEEEEEEGDNEEQDS) shows a compositional bias: acidic residues. Disordered regions lie at residues 188–276 (YEEE…QRRL), 393–412 (THVL…HPAL), and 419–486 (MQLQ…FQQQ). Over residues 214–223 (SSVASSAVAS) the composition is skewed to low complexity. A phosphoserine mark is found at Ser223 and Ser230. 3 stretches are compositionally biased toward low complexity: residues 396-412 (LQQH…HPAL), 419-435 (MQLQ…QQQP), and 445-486 (QFPQ…FQQQ). The segment at 577–1056 (QLFGHDPAVE…TLDYESYKFN (480 aa)) is interaction with TP53BP1. BRCT domains are found at residues 588-681 (PEES…RALH), 688-776 (PGGK…VQYS), 853-934 (TPLV…NYIL), and 955-989 (HVSP…GGKV). The Nuclear localization signal motif lies at 655-672 (RKRCVTAHWLNTVLKKKK).

Interacts with the C-terminal transactivation domain of PAX2. Forms a constitutive complex with PAGR1 independently of the MLL2/MLL3 complex. Interacts with TP53BP1 (when phosphorylated at the N-terminus by ATM). Interacts with HLTF. Component of the KMT2 family MLL2/MLL3 complex (also named ASCOM complex), at least composed of the HMTs KMT2D and/or KMT2C, the common subunits ASH2L, RBBP5, WDR5 and DPY30, and the complex type-specific subunits PAXIP1/PTIP, PAGR1, NCOA6 and KDM6A; required for the association of PAGR1 with the MLL2/MLL3 complex. Interacts with NUPR1; this interaction prevents PAXIP1 inhibition of PAX2 transcription factor activity. In terms of tissue distribution, expression detected in all tissues examined, including brain stem, cerebellum, cortex, heart, spleen, kidney, liver, thymus and lung.

Its subcellular location is the nucleus matrix. The protein resides in the chromosome. Involved in DNA damage response and in transcriptional regulation through histone methyltransferase (HMT) complexes such as the MLL2/MLL3 complex. Plays a role in early development. In DNA damage response is required for cell survival after ionizing radiation. In vitro shown to be involved in the homologous recombination mechanism for the repair of double-strand breaks (DSBs). Its localization to DNA damage foci requires Rnf8 and Ube2n. Recruits Tp53bp1 to DNA damage foci and, at least in particular repair processes, effective DNA damage response appears to require the association with Tp53bp1 phosphorylated by Atm. Together with Tp53bp1 regulates Atm association. Proposed to recruit Pagr1 to sites of DNA damage and the Pagr1:Paxip1 complex is required for cell survival in response to DNA damage independently of the MLL2/MLL3 complex. However, this function has been questioned. Promotes ubiquitination of PCNA following UV irradiation and may regulate recruitment of polymerase eta and Rad51 to chromatin after DNA damage. Proposed to be involved in transcriptional regulation by linking MLL-containing histone methyltransferase (HMT) complexes to gene promoters by interacting with promoter-bound transcription factors such as Pax2. Associates with gene promoters that are known to be regulated by Kmt2d/Mll2. During immunoglobulin class switching in activated B-cells is involved in trimethylation of histone H3 at 'Lys-4' and in transcription initiation of downstream switch regions at the immunoglobulin heavy-chain (Igh) locus; this function appears to involve the recruitment of MLL-containing HMT complexes. Conflictingly, its function in transcriptional regulation during immunoglobulin class switching is reported to be independent of the MLL2/MLL3 complex. The sequence is that of PAX-interacting protein 1 (Paxip1) from Mus musculus (Mouse).